Here is a 520-residue protein sequence, read N- to C-terminus: Maturase K (520 aa).

It belongs to the intron maturase 2 family. MatK subfamily.

The protein localises to the plastid. The protein resides in the chloroplast. In terms of biological role, usually encoded in the trnK tRNA gene intron. Probably assists in splicing its own and other chloroplast group II introns. The polypeptide is Maturase K (Linum perenne (Perennial flax)).